A 279-amino-acid chain; its full sequence is MTKADQIFKANIQKIINEGSLSEQARPKYKDGRTAHSKYITGAFAEYDLAKGEFPITTLRPIPIKSAIKELFWIYQDQSNSLDVLEAKYNVHYWNEWEVDQTRTIGQRYGAVVKKHDIISKILKQLAENPWNRRNVISLWDYEAFEETKGLLPCAFQIMFDVRRVGEDLYLDASLTQRSNDILVAHHINAMQYVALQMMIAKHFGWKIGKFFYFVNNLHIYDNQFDQAQELLKRQPVASQPKLVLNVPDRTNFFDIKPDDFELQNYDPVKPQLHFDLAI.

133 to 134 (RR) lines the dUMP pocket. C154 serves as the catalytic Nucleophile. DUMP is bound by residues 178–181 (RSND), N189, and 219–221 (HIY). D181 contacts (6R)-5,10-methylene-5,6,7,8-tetrahydrofolate. A (6R)-5,10-methylene-5,6,7,8-tetrahydrofolate-binding site is contributed by A278.

The protein belongs to the thymidylate synthase family. Bacterial-type ThyA subfamily. As to quaternary structure, homodimer.

It is found in the cytoplasm. It carries out the reaction dUMP + (6R)-5,10-methylene-5,6,7,8-tetrahydrofolate = 7,8-dihydrofolate + dTMP. Its pathway is pyrimidine metabolism; dTTP biosynthesis. In terms of biological role, catalyzes the reductive methylation of 2'-deoxyuridine-5'-monophosphate (dUMP) to 2'-deoxythymidine-5'-monophosphate (dTMP) while utilizing 5,10-methylenetetrahydrofolate (mTHF) as the methyl donor and reductant in the reaction, yielding dihydrofolate (DHF) as a by-product. This enzymatic reaction provides an intracellular de novo source of dTMP, an essential precursor for DNA biosynthesis. This Streptococcus pyogenes serotype M3 (strain SSI-1) protein is Thymidylate synthase.